The chain runs to 276 residues: Transport and Golgi organization 2 homolog (276 aa).

Belongs to the Tango2 family. As to expression, expressed in fetal liver, lung, heart and kidney. In brain, detected in the olfactory bulb, neocortex and cerebellum. Elevated in mitral cells and minimally expressed in bulb interneurons. In the cortex, restricted to the upper portion of layer 5. In the cerebellum, excluded from Purkinje cells but expressed in granule cells.

The protein localises to the cytoplasm. Its subcellular location is the mitochondrion. The protein resides in the golgi apparatus. Its function is as follows. May be involved in lipid homeostasis. The polypeptide is Transport and Golgi organization 2 homolog (Tango2) (Mus musculus (Mouse)).